A 638-amino-acid chain; its full sequence is Growth hormone receptor (638 aa).

A signal peptide spans M1–A18. The Extracellular portion of the chain corresponds to V19 to Q264. Disulfide bonds link C56–C66 and C101–C112. N115 is a glycosylation site (N-linked (GlcNAc...) asparagine). C126 and C140 form a disulfide bridge. Residues P151–M254 enclose the Fibronectin type-III domain. N156, N161, and N200 each carry an N-linked (GlcNAc...) asparagine glycan. Residues Y240–S244 carry the WSXWS motif motif. Residues F265 to S288 form a helical membrane-spanning segment. At K289 to P638 the chain is on the cytoplasmic side. The tract at residues K294 to A379 is required for JAK2 binding. The Box 1 motif signature appears at I297–K305. The short motif at D340–D349 is the UbE motif element. The residue at position 341 (S341) is a Phosphoserine. The segment covering K429–P446 has biased composition (polar residues). The interval K429–V448 is disordered. Phosphotyrosine is present on residues Y487 and Y595.

It belongs to the type I cytokine receptor family. Type 1 subfamily. As to quaternary structure, on growth hormone (GH) binding, forms homodimers and binds JAK2 via a box 1-containing domain. The soluble form (GHBP) is produced by phorbol ester-promoted proteolytic cleavage at the cell surface (shedding) by ADAM17/TACE. Shedding is inhibited by growth hormone (GH) binding to the receptor probably due to a conformational change in GHR rendering the receptor inaccessible to ADAM17. Post-translationally, on GH binding, phosphorylated on tyrosine residues in the cytoplasmic domain by JAK2. In terms of processing, ubiquitinated by the ECS(SOCS2) complex following ligand-binding and phosphorylation by JAK2, leading to its degradation by the proteasome. Regulation by the ECS(SOCS2) complex acts as a negative feedback loop of growth hormone receptor signaling. Ubiquitination is not sufficient for GHR internalization.

It localises to the cell membrane. The protein localises to the secreted. Its function is as follows. Receptor for pituitary gland growth hormone (GH1) involved in regulating postnatal body growth. On ligand binding, couples to the JAK2/STAT5 pathway. In terms of biological role, the soluble form (GHBP) acts as a reservoir of growth hormone in plasma and may be a modulator/inhibitor of GH signaling. The sequence is that of Growth hormone receptor (GHR) from Ailuropoda melanoleuca (Giant panda).